The primary structure comprises 521 residues: GMP synthase [glutamine-hydrolyzing] (521 aa).

One can recognise a Glutamine amidotransferase type-1 domain in the interval 5–197 (KILILDFGSQ…VLDICGAQPG (193 aa)). The Nucleophile role is filled by Cys-81. Catalysis depends on residues His-171 and Glu-173. In terms of domain architecture, GMPS ATP-PPase spans 198–390 (WTMPNYIEEA…LGLPREMVYR (193 aa)). 225–231 (SGGVDSS) serves as a coordination point for ATP.

Homodimer.

It carries out the reaction XMP + L-glutamine + ATP + H2O = GMP + L-glutamate + AMP + diphosphate + 2 H(+). Its pathway is purine metabolism; GMP biosynthesis; GMP from XMP (L-Gln route): step 1/1. In terms of biological role, catalyzes the synthesis of GMP from XMP. This is GMP synthase [glutamine-hydrolyzing] (guaA) from Neisseria meningitidis serogroup A / serotype 4A (strain DSM 15465 / Z2491).